The following is a 172-amino-acid chain: Podoplanin (172 aa).

Positions 1–22 (MWTVPVLFWVLGSVWFWDSAQG) are cleaved as a signal peptide. The Extracellular segment spans residues 23-141 (GTIGVNEDDI…KKDGLPVVTL (119 aa)). Residues T37, T51, T52, T53, and T56 are each glycosylated (O-linked (GalNAc...) threonine). The tract at residues 49–132 (KITTTGATGG…AGDETQTTDK (84 aa)) is disordered. Polar residues predominate over residues 51 to 63 (TTTGATGGLNEST). The N-linked (GlcNAc...) asparagine glycan is linked to N60. T63, T71, and T77 each carry an O-linked (GalNAc...) threonine glycan. Residues 72–81 (QRERGTKPPL) show a composition bias toward basic and acidic residues. O-linked (GalNAc...) serine glycosylation is present at S85. T86 carries an O-linked (GalNAc...) threonine glycan. S87 carries an O-linked (GalNAc...) serine glycan. A glycan (O-linked (GalNAc...) threonine) is linked at T89. Residue S90 is glycosylated (O-linked (GalNAc...) serine). The segment covering 90 to 99 (SDHDHREHES) has biased composition (basic and acidic residues). O-linked (GalNAc...) threonine glycans are attached at residues T100, T101, T102, T107, and T115. A compositionally biased stretch (low complexity) spans 100–109 (TTTVKVVTSH). Residues 110-132 (SVDKKTSHPNRDNAGDETQTTDK) are compositionally biased toward basic and acidic residues. A helical membrane pass occupies residues 142-162 (VGIIVGVLLAIGFVGGIFIVV). Residues 143–147 (GIIVG) form a requires for dimerization and lipidd rafts association region. Over 163–172 (MKKISGRFSP) the chain is Cytoplasmic. A requires for interaction with MSN and EZR region spans residues 164 to 165 (KK).

Belongs to the podoplanin family. As to quaternary structure, homodimer. Interacts with CLEC1B; the interaction is independent of CLEC1B glycosylation and activates CLEC1B; the interaction is dependent of sialic acid on O-glycans. Interacts with CD9; this interaction is homophilic and attenuates platelet aggregation and pulmonary metastasis induced by PDPN. Interacts with LGALS8; the interaction is glycosylation-dependent; may participate in connection of the lymphatic endothelium to the surrounding extracellular matrix. Interacts with HSPA9. Interacts (via extracellular domain) with CD44; this interaction is required for PDPN-mediated directional migration and regulation of lamellipodia extension/stabilization during cell spreading and migration. Interacts (via cytoplasmic domain) with MSN and EZR; activates RHOA and promotes epithelial-mesenchymal transition. Interacts with CCL21; relocalized PDPN to the basolateral membrane. Post-translationally, extensively O-glycosylated. Contains sialic acid residues. O-glycosylation is necessary for platelet aggregation activity. Disialylated at Thr-52; sialic acid is critical for platelet-aggregating activity and for CLEC1B interaction. Phosphorylated by PKA; decreases cell migration. In terms of processing, the N-terminus is blocked. Detected at high levels in lung and brain, at lower levels in kidney, stomach, liver, spleen and esophagus, and not detected in skin and small intestine. Expressed in epithelial cells of choroid plexus, ependyma, glomerulus and alveolus, in mesothelial cells and in endothelia of lymphatic vessels. Also expressed in stromal cells of peripheral lymphoid tissue and thymic epithelial cells. Detected in carcinoma cell lines and cultured fibroblasts. Expressed at higher levels in colon carcinomas than in normal colon tissue.

The protein localises to the membrane. It localises to the cell projection. It is found in the lamellipodium membrane. The protein resides in the filopodium membrane. Its subcellular location is the microvillus membrane. The protein localises to the ruffle membrane. It localises to the membrane raft. It is found in the apical cell membrane. The protein resides in the basolateral cell membrane. Its subcellular location is the invadopodium. Its function is as follows. Mediates effects on cell migration and adhesion through its different partners. During development plays a role in blood and lymphatic vessels separation by binding CLEC1B, triggering CLEC1B activation in platelets and leading to platelet activation and/or aggregation. Interaction with CD9, on the contrary, attenuates platelet aggregation and pulmonary metastasis induced by PDPN. Mediates effects on cell migration and adhesion through its different partners. Through MSN or EZR interaction promotes epithelial-mesenchymal transition (EMT) leading to ERZ phosphorylation and triggering RHOA activation leading to cell migration increase and invasiveness. Interaction with CD44 promotes directional cell migration in epithelial and tumor cells. In lymph nodes (LNs), controls fibroblastic reticular cells (FRCs) adhesion to the extracellular matrix (ECM) and contraction of the actomyosin by maintaining ERM proteins (EZR; MSN and RDX) and MYL9 activation through association with unknown transmembrane proteins. Engagement of CLEC1B by PDPN promotes FRCs relaxation by blocking lateral membrane interactions leading to reduction of ERM proteins (EZR; MSN and RDX) and MYL9 activation. Through binding with LGALS8 may participate in connection of the lymphatic endothelium to the surrounding extracellular matrix. In keratinocytes, induces changes in cell morphology showing an elongated shape, numerous membrane protrusions, major reorganization of the actin cytoskeleton, increased motility and decreased cell adhesion. Controls invadopodia stability and maturation leading to efficient degradation of the extracellular matrix (ECM) in tumor cells through modulation of RHOC activity in order to activate ROCK1/ROCK2 and LIMK1/LIMK2 and inactivation of CFL1. Required for normal lung cell proliferation and alveolus formation at birth. Does not function as a water channel or as a regulator of aquaporin-type water channels. Does not have any effect on folic acid or amino acid transport. The sequence is that of Podoplanin from Mus musculus (Mouse).